The chain runs to 471 residues: Collagenase 3 (471 aa).

Positions 1–19 are cleaved as a signal peptide; sequence MHPGVLAAFLFLSWTHCRA. Residues 20 to 103 constitute a propeptide, activation peptide; the sequence is LPLPSGGDED…PRCGVPDVGE (84 aa). Residues 94–101 carry the Cysteine switch motif; sequence PRCGVPDV. Zn(2+) is bound at residue Cys-96. Residue Asn-117 is glycosylated (N-linked (GlcNAc...) asparagine). Asp-128 lines the Ca(2+) pocket. Asn-152 carries an N-linked (GlcNAc...) asparagine glycan. Residue Asp-162 participates in Ca(2+) binding. Residues His-172 and Asp-174 each contribute to the Zn(2+) site. The tract at residues 176 to 246 is interaction with TIMP2; it reads YPFDGPSGLL…GALMFPIYTY (71 aa). Positions 179, 180, 182, and 184 each coordinate Ca(2+). Residue His-187 coordinates Zn(2+). Residues Asn-194, Gly-196, and Asp-198 each coordinate Ca(2+). His-200 contributes to the Zn(2+) binding site. 3 residues coordinate Ca(2+): Asp-202, Asp-203, and Glu-205. Zn(2+) is bound at residue His-222. Glu-223 is a catalytic residue. His-226, His-232, and Met-240 together coordinate Zn(2+). The segment at 263–284 is disordered; it reads QSLYGPGDEDPNPKHPKTPDKC. Positions 268–471 are interaction with collagen; sequence PGDEDPNPKH…VMPANSILWC (204 aa). Residues 273–284 are compositionally biased toward basic and acidic residues; sequence PNPKHPKTPDKC. Hemopexin repeat units follow at residues 281–330, 331–377, 379–427, and 428–471; these read PDKC…WPEL, PNRI…GLPK, VKKI…FPGI, and GDKV…ILWC. Cys-284 and Cys-471 are disulfide-bonded. Residues Asp-291, Ile-293, Asp-335, and Ala-337 each contribute to the Ca(2+) site. Position 366 is a phosphotyrosine; by PKDCC (Tyr-366). Ca(2+)-binding residues include Ser-383, Ala-385, Asp-432, and Val-434.

Belongs to the peptidase M10A family. Monomer. Interacts with TIMP1, TIMP2 and TIMP3. Binds (via the C-terminal region) to collagen. Requires Ca(2+) as cofactor. Zn(2+) is required as a cofactor. Post-translationally, the proenzyme is activated by removal of the propeptide; this cleavage can be effected by other matrix metalloproteinases, such as MMP2, MMP3 and MMP14 and may involve several cleavage steps. Cleavage can also be autocatalytic, after partial maturation by another protease or after treatment with 4-aminophenylmercuric acetate (APMA) (in vitro). N-glycosylated. In terms of processing, tyrosine phosphorylated by PKDCC/VLK. In terms of tissue distribution, detected in fetal cartilage and calvaria, in chondrocytes of hypertrophic cartilage in vertebrae and in the dorsal end of ribs undergoing ossification, as well as in osteoblasts and periosteal cells below the inner periosteal region of ossified ribs. Detected in chondrocytes from in joint cartilage that have been treated with TNF and IL1B, but not in untreated chondrocytes. Detected in T lymphocytes. Detected in breast carcinoma tissue.

It is found in the secreted. Its subcellular location is the extracellular space. The protein resides in the extracellular matrix. With respect to regulation, inhibited by TIMP1, TIMP2 and TIMP3. Inhibited by acetohydroxamic acid and other zinc chelators. Plays a role in the degradation of extracellular matrix proteins including fibrillar collagen, fibronectin, TNC and ACAN. Cleaves triple helical collagens, including type I, type II and type III collagen, but has the highest activity with soluble type II collagen. Can also degrade collagen type IV, type XIV and type X. May also function by activating or degrading key regulatory proteins, such as TGFB1 and CCN2. Plays a role in wound healing, tissue remodeling, cartilage degradation, bone development, bone mineralization and ossification. Required for normal embryonic bone development and ossification. Plays a role in the healing of bone fractures via endochondral ossification. Plays a role in wound healing, probably by a mechanism that involves proteolytic activation of TGFB1 and degradation of CCN2. Plays a role in keratinocyte migration during wound healing. May play a role in cell migration and in tumor cell invasion. This Homo sapiens (Human) protein is Collagenase 3 (MMP13).